Here is a 593-residue protein sequence, read N- to C-terminus: Immunoglobulin G-binding protein G (593 aa).

A signal peptide spans 1–33 (MEKEKKVKYFLRKSAFGLASVSAAFLVGSTVFA). Tandem repeats lie at residues 104–140 (LAKA…VKDL), 179–215 (LAEA…VKDL), 254–290 (LAEA…VKAL), 303–357 (TYKL…TVTE), and 373–427 (TYKL…TVTE). Positions 104–290 (LAKAKADALK…AKTVEGVKAL (187 aa)) are 3 X 37 AA repeats. Residues 303 to 427 (TYKLILNGKT…DATKTFTVTE (125 aa)) are 2 X 55 AA repeats. Positions 503–567 (PGDAPTEPEK…TLPTTGEGSN (65 aa)) are disordered. The segment covering 529–557 (AKDDAKKDDTKKEDAKKPEAKKEDAKKAE) has biased composition (basic and acidic residues). Residues 531–555 (DDAKKDDTKKEDAKKPEAKKEDAKK) are 5 X 5 AA repeats of [DE]-D-A-K-K. The LPXTG sorting signal motif lies at 559–563 (LPTTG). Residue Thr-562 is modified to Pentaglycyl murein peptidoglycan amidated threonine. The propeptide at 563–593 (GEGSNPFFTAAALAVMAGAGALAVASKRKED) is removed by sortase.

It localises to the secreted. It is found in the cell wall. This Streptococcus sp. group G protein is Immunoglobulin G-binding protein G (spg).